Reading from the N-terminus, the 438-residue chain is Glutamate-1-semialdehyde 2,1-aminomutase (438 aa).

Lys272 bears the N6-(pyridoxal phosphate)lysine mark.

Belongs to the class-III pyridoxal-phosphate-dependent aminotransferase family. HemL subfamily. As to quaternary structure, homodimer. Pyridoxal 5'-phosphate serves as cofactor.

It is found in the cytoplasm. It catalyses the reaction (S)-4-amino-5-oxopentanoate = 5-aminolevulinate. The protein operates within porphyrin-containing compound metabolism; protoporphyrin-IX biosynthesis; 5-aminolevulinate from L-glutamyl-tRNA(Glu): step 2/2. Its pathway is porphyrin-containing compound metabolism; chlorophyll biosynthesis. The polypeptide is Glutamate-1-semialdehyde 2,1-aminomutase (Chloroflexus aggregans (strain MD-66 / DSM 9485)).